A 1204-amino-acid chain; its full sequence is ATP-dependent helicase/nuclease subunit A (1204 aa).

A UvrD-like helicase ATP-binding domain is found at 2 to 469; it reads TKFTKEQNQA…IVLSDNFRST (468 aa). 23–30 lines the ATP pocket; sequence ASAGSGKT. Residues 496 to 784 form the UvrD-like helicase C-terminal domain; the sequence is EGQLQFGATY…KLMTIHASKG (289 aa).

It belongs to the helicase family. AddA subfamily. As to quaternary structure, heterodimer of AddA and AddB/RexB. It depends on Mg(2+) as a cofactor.

It catalyses the reaction Couples ATP hydrolysis with the unwinding of duplex DNA by translocating in the 3'-5' direction.. The catalysed reaction is ATP + H2O = ADP + phosphate + H(+). Its function is as follows. The heterodimer acts as both an ATP-dependent DNA helicase and an ATP-dependent, dual-direction single-stranded exonuclease. Recognizes the chi site generating a DNA molecule suitable for the initiation of homologous recombination. The AddA nuclease domain is required for chi fragment generation; this subunit has the helicase and 3' -&gt; 5' nuclease activities. The chain is ATP-dependent helicase/nuclease subunit A from Lactobacillus johnsonii (strain CNCM I-12250 / La1 / NCC 533).